A 173-amino-acid chain; its full sequence is Ribosome maturation factor RimM (173 aa).

In terms of domain architecture, PRC barrel spans 90–169 (EDEYFWFDIL…RIDTKGAQDI (80 aa)).

This sequence belongs to the RimM family. Binds ribosomal protein uS19.

It localises to the cytoplasm. An accessory protein needed during the final step in the assembly of 30S ribosomal subunit, possibly for assembly of the head region. Essential for efficient processing of 16S rRNA. May be needed both before and after RbfA during the maturation of 16S rRNA. It has affinity for free ribosomal 30S subunits but not for 70S ribosomes. This Nitratiruptor sp. (strain SB155-2) protein is Ribosome maturation factor RimM.